Here is a 304-residue protein sequence, read N- to C-terminus: Acetyl-coenzyme A carboxylase carboxyl transferase subunit beta (304 aa).

The region spanning 23 to 292 (VWTKCDSCGQ…PNPEAPREGV (270 aa)) is the CoA carboxyltransferase N-terminal domain. Zn(2+)-binding residues include cysteine 27, cysteine 30, cysteine 46, and cysteine 49. A C4-type zinc finger spans residues 27 to 49 (CDSCGQVLYRAELERNLEVCPKC). The disordered stretch occupies residues 284 to 304 (NPEAPREGVVVPPVPDQEPEA). Residues 295–304 (PPVPDQEPEA) are compositionally biased toward pro residues.

The protein belongs to the AccD/PCCB family. Acetyl-CoA carboxylase is a heterohexamer composed of biotin carboxyl carrier protein (AccB), biotin carboxylase (AccC) and two subunits each of ACCase subunit alpha (AccA) and ACCase subunit beta (AccD). The cofactor is Zn(2+).

Its subcellular location is the cytoplasm. The enzyme catalyses N(6)-carboxybiotinyl-L-lysyl-[protein] + acetyl-CoA = N(6)-biotinyl-L-lysyl-[protein] + malonyl-CoA. It functions in the pathway lipid metabolism; malonyl-CoA biosynthesis; malonyl-CoA from acetyl-CoA: step 1/1. Its function is as follows. Component of the acetyl coenzyme A carboxylase (ACC) complex. Biotin carboxylase (BC) catalyzes the carboxylation of biotin on its carrier protein (BCCP) and then the CO(2) group is transferred by the transcarboxylase to acetyl-CoA to form malonyl-CoA. The polypeptide is Acetyl-coenzyme A carboxylase carboxyl transferase subunit beta (Escherichia coli O6:K15:H31 (strain 536 / UPEC)).